The chain runs to 31 residues: Photosystem II reaction center protein T (31 aa).

The helical transmembrane segment at 3 to 23 (SVAYILILTMALAVLFFAIAF) threads the bilayer.

It belongs to the PsbT family. PSII is composed of 1 copy each of membrane proteins PsbA, PsbB, PsbC, PsbD, PsbE, PsbF, PsbH, PsbI, PsbJ, PsbK, PsbL, PsbM, PsbT, PsbX, PsbY, PsbZ, Psb30/Ycf12, peripheral proteins PsbO, CyanoQ (PsbQ), PsbU, PsbV and a large number of cofactors. It forms dimeric complexes.

The protein localises to the cellular thylakoid membrane. Functionally, found at the monomer-monomer interface of the photosystem II (PS II) dimer, plays a role in assembly and dimerization of PSII. PSII is a light-driven water plastoquinone oxidoreductase, using light energy to abstract electrons from H(2)O, generating a proton gradient subsequently used for ATP formation. The protein is Photosystem II reaction center protein T of Gloeothece citriformis (strain PCC 7424) (Cyanothece sp. (strain PCC 7424)).